The sequence spans 72 residues: Probable transcription factor elt-4 (72 aa).

A GATA-type zinc finger spans residues 16–40 (CSNCNGTNTTLWRRKAEGDPVCNAC).

The protein resides in the nucleus. Functionally, probable transcription factor. Plays a role in regulating heme-dependent expression of heme transporter hrg-1. Modulates lifespan in a daf-16-dependent manner. The protein is Probable transcription factor elt-4 of Caenorhabditis elegans.